Reading from the N-terminus, the 660-residue chain is Polycomb protein SCMH1 (660 aa).

MBT repeat units lie at residues 28–126 and 134–235; these read FTWD…LQPP and SSWP…LQPP. Positions 233–345 are disordered; it reads QPPGTKVVIP…EPDTSTVPQD (113 aa). 2 stretches are compositionally biased toward basic residues: residues 273–284 and 305–320; these read RGRKPGKKRGRT and FPKK…RKPR. Low complexity predominate over residues 330–343; sequence PTTSTPEPDTSTVP. Residues 593-658 enclose the SAM domain; it reads WTVEDVMQFV…SYHIDRLKQG (66 aa).

This sequence belongs to the SCM family. As to quaternary structure, interacts with the SAM domain of PHC1 via its SAM domain in vitro. Associates with a PRC1-like complex. Strongly expressed in heart, muscle and pancreas. Weakly expressed in brain, placenta, lung, liver and kidney.

Its subcellular location is the nucleus. Associates with Polycomb group (PcG) multiprotein complexes; the complex class is required to maintain the transcriptionally repressive state of some genes. This Homo sapiens (Human) protein is Polycomb protein SCMH1.